A 210-amino-acid polypeptide reads, in one-letter code: dITP/XTP pyrophosphatase (210 aa).

Position 19-24 (19-24) interacts with substrate; sequence SNNPGK. Residues aspartate 51 and aspartate 80 each coordinate Mg(2+). Aspartate 80 (proton acceptor) is an active-site residue. Residues serine 81, 166 to 169, lysine 189, and 194 to 195 contribute to the substrate site; these read FGYD and HR.

This sequence belongs to the HAM1 NTPase family. As to quaternary structure, homodimer. Requires Mg(2+) as cofactor.

It catalyses the reaction XTP + H2O = XMP + diphosphate + H(+). The catalysed reaction is dITP + H2O = dIMP + diphosphate + H(+). The enzyme catalyses ITP + H2O = IMP + diphosphate + H(+). In terms of biological role, pyrophosphatase that catalyzes the hydrolysis of nucleoside triphosphates to their monophosphate derivatives, with a high preference for the non-canonical purine nucleotides XTP (xanthosine triphosphate), dITP (deoxyinosine triphosphate) and ITP. Seems to function as a house-cleaning enzyme that removes non-canonical purine nucleotides from the nucleotide pool, thus preventing their incorporation into DNA/RNA and avoiding chromosomal lesions. This is dITP/XTP pyrophosphatase from Burkholderia mallei (strain ATCC 23344).